The primary structure comprises 326 residues: Malate dehydrogenase (326 aa).

Glycine 12–alanine 18 contributes to the NAD(+) binding site. Substrate-binding residues include arginine 93 and arginine 99. Residues asparagine 106, glutamine 113, and valine 130 to asparagine 132 contribute to the NAD(+) site. Residues asparagine 132 and arginine 163 each coordinate substrate. Histidine 188 serves as the catalytic Proton acceptor.

This sequence belongs to the LDH/MDH superfamily. MDH type 2 family.

The enzyme catalyses (S)-malate + NAD(+) = oxaloacetate + NADH + H(+). Functionally, catalyzes the reversible oxidation of malate to oxaloacetate. The polypeptide is Malate dehydrogenase (Chlamydia muridarum (strain MoPn / Nigg)).